We begin with the raw amino-acid sequence, 239 residues long: 7-cyano-7-deazaguanine synthase (239 aa).

16–26 (FSGGQDSTTCL) contributes to the ATP binding site. Zn(2+) contacts are provided by cysteine 204, cysteine 219, cysteine 222, and cysteine 225.

The protein belongs to the QueC family. It depends on Zn(2+) as a cofactor.

It catalyses the reaction 7-carboxy-7-deazaguanine + NH4(+) + ATP = 7-cyano-7-deazaguanine + ADP + phosphate + H2O + H(+). Its pathway is purine metabolism; 7-cyano-7-deazaguanine biosynthesis. Functionally, catalyzes the ATP-dependent conversion of 7-carboxy-7-deazaguanine (CDG) to 7-cyano-7-deazaguanine (preQ(0)). The sequence is that of 7-cyano-7-deazaguanine synthase from Polaromonas naphthalenivorans (strain CJ2).